The sequence spans 290 residues: Ciliary microtubule inner protein 6 (290 aa).

A disordered region spans residues 76-112; sequence ENQGDWWPHGKGLENPFQPPYDTKSTQRSDFKKPTCP. 2 mn regions span residues 128–160 and 213–246; these read GIVP…ARKT and SAES…IRVA. Residues 197-228 form a disordered region; that stretch reads SGSCSSEQSKKTEKGNSAESKMISPGLCRQNS.

Its subcellular location is the cell projection. The protein resides in the cilium. The chain is Ciliary microtubule inner protein 6 (CIMIP6) from Bos taurus (Bovine).